Consider the following 457-residue polypeptide: Multidrug resistance protein MdtK (457 aa).

The next 12 membrane-spanning stretches (helical) occupy residues 11–31 (LLALAIPVVIAQLSQTAMGVV), 46–66 (AVAVGTSIWLPAILFGHGLLL), 93–113 (WLALCVSVLIMLVLYNSDHVI), 127–147 (AVGFLHAIMWGVPGYLFFQVL), 160–180 (GMVIGFVGLLVNIPINYIFIY), 188–208 (LGGVGCGVATASVYWVMFLMM), 243–263 (LPVALALFFEVTLFAVVALLV), 283–301 (LMFMLPMSLSVAATIRVGF), 316–336 (YTSMAVGLLLASVTAVFTIVF), 357–377 (LMLLAALYQLSDAVQVIGSGV), 387–407 (IFFITFTAYWLLGLPSGYLLG), and 418–438 (PAGFWIGFIIGLTAAAILMVL).

This sequence belongs to the multi antimicrobial extrusion (MATE) (TC 2.A.66.1) family. MdtK subfamily.

It is found in the cell inner membrane. Functionally, multidrug efflux pump that functions probably as a Na(+)/drug antiporter. This Yersinia pseudotuberculosis serotype IB (strain PB1/+) protein is Multidrug resistance protein MdtK.